The following is a 64-amino-acid chain: Conotoxin Ca5.3 (64 aa).

An N-terminal signal peptide occupies residues 1-22 (MRCVPVFIILLLLIASAPGVDA). Residues 23–48 (QPKTKYNAPLTSLHDNAKGILQEHWN) constitute a propeptide that is removed on maturation. The residue at position 61 (isoleucine 61) is an Isoleucine amide.

Belongs to the conotoxin T superfamily. Post-translationally, contains 2 disulfide bonds that can be either 'C1-C3, C2-C4' or 'C1-C4, C2-C3', since these disulfide connectivities have been observed for conotoxins with cysteine framework V (for examples, see AC P0DQQ7 and AC P81755). Expressed by the venom duct.

Its subcellular location is the secreted. In Conus caracteristicus (Characteristic cone), this protein is Conotoxin Ca5.3.